Consider the following 389-residue polypeptide: Cellobiose 2-epimerase (389 aa).

It belongs to the cellobiose 2-epimerase family.

The enzyme catalyses D-cellobiose = beta-D-glucosyl-(1-&gt;4)-D-mannopyranose. Functionally, catalyzes the reversible epimerization of cellobiose to 4-O-beta-D-glucopyranosyl-D-mannose (Glc-Man). This is Cellobiose 2-epimerase from Ruminococcus albus (strain ATCC 27210 / DSM 20455 / JCM 14654 / NCDO 2250 / 7).